Here is a 574-residue protein sequence, read N- to C-terminus: Zinc finger protein 394 (574 aa).

Residue Ser12 is modified to Phosphoserine. Lys40 is covalently cross-linked (Glycyl lysine isopeptide (Lys-Gly) (interchain with G-Cter in SUMO2)). The SCAN box domain occupies 64–146; that stretch reads RLHFRQLRYQ…AVVRALQRAL (83 aa). The region spanning 155–230 is the KRAB domain; it reads VTFEDMAVSL…LQEAFQGKHP (76 aa). Residues 182 to 202 are disordered; it reads ESAQKDSGSTVPPSLESRVEN. Residues Lys203, Lys228, and Lys254 each participate in a glycyl lysine isopeptide (Lys-Gly) (interchain with G-Cter in SUMO2) cross-link. Residues 231 to 284 are disordered; the sequence is LFSKCGSTHEDRVEKQSGNPLPLKLENSAEAEGLNSISDVNKNGSIEGEDSKNN. Polar residues predominate over residues 265 to 274; sequence NSISDVNKNG. Lys282 participates in a covalent cross-link: Glycyl lysine isopeptide (Lys-Gly) (interchain with G-Cter in SUMO2). 7 C2H2-type zinc fingers span residues 358–380, 386–408, 414–436, 442–463, 469–491, 497–519, and 525–547; these read YKCG…QRIH, YGCQ…QRTH, YTCL…QSTH, FKCE…QRLH, YKCE…HRIH, YGCS…QRIH, and YKCL…QRIH. Residue Lys443 forms a Glycyl lysine isopeptide (Lys-Gly) (interchain with G-Cter in SUMO2) linkage.

The protein belongs to the krueppel C2H2-type zinc-finger protein family.

It is found in the nucleus. In terms of biological role, may be involved in transcriptional regulation. This is Zinc finger protein 394 (ZNF394) from Pongo abelii (Sumatran orangutan).